Reading from the N-terminus, the 401-residue chain is Lipid-A-disaccharide synthase (401 aa).

The protein belongs to the LpxB family.

The catalysed reaction is a lipid X + a UDP-2-N,3-O-bis[(3R)-3-hydroxyacyl]-alpha-D-glucosamine = a lipid A disaccharide + UDP + H(+). It functions in the pathway bacterial outer membrane biogenesis; LPS lipid A biosynthesis. In terms of biological role, condensation of UDP-2,3-diacylglucosamine and 2,3-diacylglucosamine-1-phosphate to form lipid A disaccharide, a precursor of lipid A, a phosphorylated glycolipid that anchors the lipopolysaccharide to the outer membrane of the cell. The polypeptide is Lipid-A-disaccharide synthase (Rhodospirillum centenum (strain ATCC 51521 / SW)).